A 294-amino-acid chain; its full sequence is Indole-3-glycerol phosphate synthase (294 aa).

The protein belongs to the TrpC family.

The enzyme catalyses 1-(2-carboxyphenylamino)-1-deoxy-D-ribulose 5-phosphate + H(+) = (1S,2R)-1-C-(indol-3-yl)glycerol 3-phosphate + CO2 + H2O. It participates in amino-acid biosynthesis; L-tryptophan biosynthesis; L-tryptophan from chorismate: step 4/5. This chain is Indole-3-glycerol phosphate synthase, found in Synechococcus sp. (strain WH7803).